The chain runs to 416 residues: LL-diaminopimelate aminotransferase (416 aa).

2 residues coordinate substrate: tyrosine 15 and glycine 42. Pyridoxal 5'-phosphate-binding positions include tyrosine 72, 108-109, tyrosine 132, asparagine 187, tyrosine 218, and 246-248; these read SK and SFS. Substrate-binding residues include lysine 109, tyrosine 132, and asparagine 187. Lysine 249 carries the post-translational modification N6-(pyridoxal phosphate)lysine. Pyridoxal 5'-phosphate is bound by residues arginine 257 and asparagine 292. Positions 292 and 388 each coordinate substrate.

This sequence belongs to the class-I pyridoxal-phosphate-dependent aminotransferase family. LL-diaminopimelate aminotransferase subfamily. As to quaternary structure, homodimer. It depends on pyridoxal 5'-phosphate as a cofactor.

The enzyme catalyses (2S,6S)-2,6-diaminopimelate + 2-oxoglutarate = (S)-2,3,4,5-tetrahydrodipicolinate + L-glutamate + H2O + H(+). It functions in the pathway amino-acid biosynthesis; L-lysine biosynthesis via DAP pathway; LL-2,6-diaminopimelate from (S)-tetrahydrodipicolinate (aminotransferase route): step 1/1. In terms of biological role, involved in the synthesis of meso-diaminopimelate (m-DAP or DL-DAP), required for both lysine and peptidoglycan biosynthesis. Catalyzes the direct conversion of tetrahydrodipicolinate to LL-diaminopimelate. The polypeptide is LL-diaminopimelate aminotransferase (Synechococcus sp. (strain JA-2-3B'a(2-13)) (Cyanobacteria bacterium Yellowstone B-Prime)).